The primary structure comprises 191 residues: 3-isopropylmalate dehydratase small subunit (191 aa).

Belongs to the LeuD family. LeuD type 1 subfamily. As to quaternary structure, heterodimer of LeuC and LeuD.

It carries out the reaction (2R,3S)-3-isopropylmalate = (2S)-2-isopropylmalate. The protein operates within amino-acid biosynthesis; L-leucine biosynthesis; L-leucine from 3-methyl-2-oxobutanoate: step 2/4. Functionally, catalyzes the isomerization between 2-isopropylmalate and 3-isopropylmalate, via the formation of 2-isopropylmaleate. The sequence is that of 3-isopropylmalate dehydratase small subunit from Lactococcus lactis subsp. cremoris (strain MG1363).